The sequence spans 122 residues: Interferon alpha-inducible protein 27, mitochondrial (122 aa).

A mitochondrion-targeting transit peptide spans 1–33; the sequence is MEASALTSSAVTSVAKVVRVASGSAVVLPLARI. A helical transmembrane segment spans residues 34 to 57; it reads ATVVIGGVVAMAAVPMVLSAMGFT. Lysine 69 participates in a covalent cross-link: Glycyl lysine isopeptide (Lys-Gly) (interchain with G-Cter in ubiquitin). The next 2 membrane-spanning stretches (helical) occupy residues 71-91 and 99-119; these read MSAA…VATL and LSGL…AVIA. The tract at residues 76–122 is mediates interaction with SKP2 and hepatitis C virus non-structural protein NS5A; the sequence is IANGGGVASGSLVATLQSLGATGLSGLTKFILGSIGSAIAAVIARFY. Positions 103–112 are required for hepatitis C virus non-structural protein NS5A degradation; that stretch reads TKFILGSIGS.

The protein belongs to the IFI6/IFI27 family. Homodimer. Interacts with hepatitis C virus/HCV non-structural protein NS5A; promotes the ubiquitin-mediated proteasomal degradation of NS5A. Interacts with SKP2; promotes the ubiquitin-mediated proteasomal degradation of NS5A. Interacts with NR4A1. May interact with BCL2. Post-translationally, ubiquitinated by TRIM21 via 'Lys-6'-linked ubiquitin chains leading to IFI27 mitochondrial migration.

Its subcellular location is the mitochondrion membrane. The protein resides in the nucleus inner membrane. It localises to the endoplasmic reticulum membrane. Probable adapter protein involved in different biological processes. Part of the signaling pathways that lead to apoptosis. Involved in type-I interferon-induced apoptosis characterized by a rapid and robust release of cytochrome C from the mitochondria and activation of BAX and caspases 2, 3, 6, 8 and 9. Also functions in TNFSF10-induced apoptosis. May also have a function in the nucleus, where it may be involved in the interferon-induced negative regulation of the transcriptional activity of NR4A1, NR4A2 and NR4A3 through the enhancement of XPO1-mediated nuclear export of these nuclear receptors. May thereby play a role in the vascular response to injury. In the innate immune response, has an antiviral activity towards hepatitis C virus/HCV. May prevent the replication of the virus by recruiting both the hepatitis C virus non-structural protein 5A/NS5A and the ubiquitination machinery via SKP2, promoting the ubiquitin-mediated proteasomal degradation of NS5A. Also promotes virus-induced pyroptosis by activating CASP3 in the mitochondria after 'Lys-6'-linked ubiquitination by TRIM21. The sequence is that of Interferon alpha-inducible protein 27, mitochondrial from Homo sapiens (Human).